The sequence spans 387 residues: Phosphoglycerate kinase (387 aa).

Substrate is bound by residues 21–23 (DLN), Arg36, 59–62 (HLGR), Arg113, and Arg146. ATP is bound by residues Lys197, Glu314, and 340–343 (GGDT).

It belongs to the phosphoglycerate kinase family. Monomer.

The protein resides in the cytoplasm. The catalysed reaction is (2R)-3-phosphoglycerate + ATP = (2R)-3-phospho-glyceroyl phosphate + ADP. It participates in carbohydrate degradation; glycolysis; pyruvate from D-glyceraldehyde 3-phosphate: step 2/5. The protein is Phosphoglycerate kinase of Tolumonas auensis (strain DSM 9187 / NBRC 110442 / TA 4).